The chain runs to 352 residues: UDP-N-acetylglucosamine--N-acetylmuramyl-(pentapeptide) pyrophosphoryl-undecaprenol N-acetylglucosamine transferase (352 aa).

UDP-N-acetyl-alpha-D-glucosamine-binding residues include serine 195 and glutamine 287.

The protein belongs to the glycosyltransferase 28 family. MurG subfamily.

It is found in the cell membrane. The catalysed reaction is Mur2Ac(oyl-L-Ala-gamma-D-Glu-L-Lys-D-Ala-D-Ala)-di-trans,octa-cis-undecaprenyl diphosphate + UDP-N-acetyl-alpha-D-glucosamine = beta-D-GlcNAc-(1-&gt;4)-Mur2Ac(oyl-L-Ala-gamma-D-Glu-L-Lys-D-Ala-D-Ala)-di-trans,octa-cis-undecaprenyl diphosphate + UDP + H(+). Its pathway is cell wall biogenesis; peptidoglycan biosynthesis. In terms of biological role, cell wall formation. Catalyzes the transfer of a GlcNAc subunit on undecaprenyl-pyrophosphoryl-MurNAc-pentapeptide (lipid intermediate I) to form undecaprenyl-pyrophosphoryl-MurNAc-(pentapeptide)GlcNAc (lipid intermediate II). The polypeptide is UDP-N-acetylglucosamine--N-acetylmuramyl-(pentapeptide) pyrophosphoryl-undecaprenol N-acetylglucosamine transferase (Streptococcus pneumoniae (strain ATCC BAA-255 / R6)).